Consider the following 950-residue polypeptide: Bifunctional glutamine synthetase adenylyltransferase/adenylyl-removing enzyme (950 aa).

Residues methionine 1–glutamate 443 are adenylyl removase. The tract at residues glutamate 450–isoleucine 950 is adenylyl transferase.

This sequence belongs to the GlnE family. Requires Mg(2+) as cofactor.

It carries out the reaction [glutamine synthetase]-O(4)-(5'-adenylyl)-L-tyrosine + phosphate = [glutamine synthetase]-L-tyrosine + ADP. The catalysed reaction is [glutamine synthetase]-L-tyrosine + ATP = [glutamine synthetase]-O(4)-(5'-adenylyl)-L-tyrosine + diphosphate. Functionally, involved in the regulation of glutamine synthetase GlnA, a key enzyme in the process to assimilate ammonia. When cellular nitrogen levels are high, the C-terminal adenylyl transferase (AT) inactivates GlnA by covalent transfer of an adenylyl group from ATP to specific tyrosine residue of GlnA, thus reducing its activity. Conversely, when nitrogen levels are low, the N-terminal adenylyl removase (AR) activates GlnA by removing the adenylyl group by phosphorolysis, increasing its activity. The regulatory region of GlnE binds the signal transduction protein PII (GlnB) which indicates the nitrogen status of the cell. The chain is Bifunctional glutamine synthetase adenylyltransferase/adenylyl-removing enzyme from Vibrio vulnificus (strain YJ016).